The primary structure comprises 159 residues: Ribosomal RNA large subunit methyltransferase H (159 aa).

S-adenosyl-L-methionine-binding positions include Gly108 and 127 to 132; that span reads FSKMTF.

This sequence belongs to the RNA methyltransferase RlmH family. In terms of assembly, homodimer.

It is found in the cytoplasm. It carries out the reaction pseudouridine(1915) in 23S rRNA + S-adenosyl-L-methionine = N(3)-methylpseudouridine(1915) in 23S rRNA + S-adenosyl-L-homocysteine + H(+). Its function is as follows. Specifically methylates the pseudouridine at position 1915 (m3Psi1915) in 23S rRNA. This Clostridium perfringens (strain ATCC 13124 / DSM 756 / JCM 1290 / NCIMB 6125 / NCTC 8237 / Type A) protein is Ribosomal RNA large subunit methyltransferase H.